The primary structure comprises 219 residues: Pollen-specific protein SF3 (219 aa).

LIM zinc-binding domains follow at residues 9–109 (QKCT…TRDK) and 110–167 (CNAC…QLFK). The interval 181 to 219 (VAAPAESETQNTETQNAETQNADTQNADTQNTETQNGSV) is disordered. Low complexity predominate over residues 185-202 (AESETQNTETQNAETQNA). The segment covering 203-219 (DTQNADTQNTETQNGSV) has biased composition (polar residues).

As to expression, pollen.

Could possibly involved in controlling pollen-specific processes such as male gamete maturation, pollen tube formation, or even fertilization. This is Pollen-specific protein SF3 (SF3) from Helianthus annuus (Common sunflower).